Consider the following 585-residue polypeptide: Arginine--tRNA ligase (585 aa).

Residues 126-136 (PNIAKEMHVGH) carry the 'HIGH' region motif.

The protein belongs to the class-I aminoacyl-tRNA synthetase family. In terms of assembly, monomer.

The protein resides in the cytoplasm. It carries out the reaction tRNA(Arg) + L-arginine + ATP = L-arginyl-tRNA(Arg) + AMP + diphosphate. This chain is Arginine--tRNA ligase, found in Crocosphaera subtropica (strain ATCC 51142 / BH68) (Cyanothece sp. (strain ATCC 51142)).